The primary structure comprises 874 residues: Alanine--tRNA ligase (874 aa).

The Zn(2+) site is built by His-561, His-565, Cys-663, and His-667.

It belongs to the class-II aminoacyl-tRNA synthetase family. Zn(2+) serves as cofactor.

The protein localises to the cytoplasm. The enzyme catalyses tRNA(Ala) + L-alanine + ATP = L-alanyl-tRNA(Ala) + AMP + diphosphate. Its function is as follows. Catalyzes the attachment of alanine to tRNA(Ala) in a two-step reaction: alanine is first activated by ATP to form Ala-AMP and then transferred to the acceptor end of tRNA(Ala). Also edits incorrectly charged Ser-tRNA(Ala) and Gly-tRNA(Ala) via its editing domain. In Trichodesmium erythraeum (strain IMS101), this protein is Alanine--tRNA ligase.